A 537-amino-acid polypeptide reads, in one-letter code: Eukaryotic translation initiation factor 3 subunit L (537 aa).

A compositionally biased stretch (basic and acidic residues) spans 1-19; sequence MSRRVEFDLSTEDHSDRRR. The tract at residues 1–30 is disordered; sequence MSRRVEFDLSTEDHSDRRRTNTFSSSADED. In terms of domain architecture, PCI spans 299–487; sequence EATKMFVNCL…GPSSADDDEP (189 aa).

Belongs to the eIF-3 subunit L family. As to quaternary structure, component of the eukaryotic translation initiation factor 3 (eIF-3) complex.

Its subcellular location is the cytoplasm. Component of the eukaryotic translation initiation factor 3 (eIF-3) complex, which is involved in protein synthesis of a specialized repertoire of mRNAs and, together with other initiation factors, stimulates binding of mRNA and methionyl-tRNAi to the 40S ribosome. The eIF-3 complex specifically targets and initiates translation of a subset of mRNAs involved in cell proliferation. In Caenorhabditis elegans, this protein is Eukaryotic translation initiation factor 3 subunit L.